A 607-amino-acid polypeptide reads, in one-letter code: Elongation factor 4 (607 aa).

Residues 6–188 enclose the tr-type G domain; sequence SRIRNFSIIA…AIVARIPPPR (183 aa). GTP is bound by residues 18-23 and 135-138; these read DHGKST and NKID.

The protein belongs to the TRAFAC class translation factor GTPase superfamily. Classic translation factor GTPase family. LepA subfamily.

It is found in the cell inner membrane. The catalysed reaction is GTP + H2O = GDP + phosphate + H(+). In terms of biological role, required for accurate and efficient protein synthesis under certain stress conditions. May act as a fidelity factor of the translation reaction, by catalyzing a one-codon backward translocation of tRNAs on improperly translocated ribosomes. Back-translocation proceeds from a post-translocation (POST) complex to a pre-translocation (PRE) complex, thus giving elongation factor G a second chance to translocate the tRNAs correctly. Binds to ribosomes in a GTP-dependent manner. This chain is Elongation factor 4, found in Sphingopyxis alaskensis (strain DSM 13593 / LMG 18877 / RB2256) (Sphingomonas alaskensis).